A 620-amino-acid chain; its full sequence is Dihydroxy-acid dehydratase (620 aa).

Residue D82 coordinates Mg(2+). [2Fe-2S] cluster is bound at residue C123. Positions 124 and 125 each coordinate Mg(2+). An N6-carboxylysine modification is found at K125. C197 contacts [2Fe-2S] cluster. E493 contributes to the Mg(2+) binding site. Catalysis depends on S519, which acts as the Proton acceptor.

The protein belongs to the IlvD/Edd family. Homodimer. [2Fe-2S] cluster is required as a cofactor. Mg(2+) serves as cofactor.

It carries out the reaction (2R)-2,3-dihydroxy-3-methylbutanoate = 3-methyl-2-oxobutanoate + H2O. The enzyme catalyses (2R,3R)-2,3-dihydroxy-3-methylpentanoate = (S)-3-methyl-2-oxopentanoate + H2O. Its pathway is amino-acid biosynthesis; L-isoleucine biosynthesis; L-isoleucine from 2-oxobutanoate: step 3/4. It participates in amino-acid biosynthesis; L-valine biosynthesis; L-valine from pyruvate: step 3/4. In terms of biological role, functions in the biosynthesis of branched-chain amino acids. Catalyzes the dehydration of (2R,3R)-2,3-dihydroxy-3-methylpentanoate (2,3-dihydroxy-3-methylvalerate) into 2-oxo-3-methylpentanoate (2-oxo-3-methylvalerate) and of (2R)-2,3-dihydroxy-3-methylbutanoate (2,3-dihydroxyisovalerate) into 2-oxo-3-methylbutanoate (2-oxoisovalerate), the penultimate precursor to L-isoleucine and L-valine, respectively. In Bifidobacterium longum (strain NCC 2705), this protein is Dihydroxy-acid dehydratase.